A 476-amino-acid polypeptide reads, in one-letter code: Cytochrome c oxidase subunit 1 (476 aa).

Residues 19–39 (LYYLWFSFLFGIYGFLLSVIL) traverse the membrane as a helical segment. Residue glutamate 42 coordinates Ca(2+). A run of 8 helical transmembrane segments spans residues 61–81 (MIFTVHGIIMIFFNIMPGLFG), 105–125 (ISLLLQPIAFILVILSTAAEF), 144–164 (LSPVAVDVIVIGLLVSGIASI), 194–214 (LIITSIMLLLTLPVLTGGVLM), 240–260 (LLWFFGHPEVYILILPAFGII), 278–298 (MILAMGCIAVLGSVVWVHHMY), 309–329 (FFTSTTILISIPTGTKVFNWL), and 345–365 (LLSLLFICTFTFGGTTGVILG). Histidine 66 provides a ligand contact to Fe(II)-heme a. Histidine 246 is a Cu cation binding site. The segment at residues 246–250 (HPEVY) is a cross-link (1'-histidyl-3'-tyrosine (His-Tyr)). Tyrosine 250 contributes to the O2 binding site. Residues histidine 295 and histidine 296 each coordinate Cu cation. The Mg(2+) site is built by histidine 374 and aspartate 375. Transmembrane regions (helical) follow at residues 379-399 (VIAHFHFVLSIGAIIALFTSV) and 415-435 (TIIVLWSILFFVGVVLTFLPM). Heme a3 is bound at residue histidine 382. Histidine 384 provides a ligand contact to Fe(II)-heme a. Proline 448 serves as a coordination point for Ca(2+). Residues 455 to 475 (NGWNMICSIGSTMTLFGLLIF) form a helical membrane-spanning segment.

Belongs to the heme-copper respiratory oxidase family. As to quaternary structure, component of the cytochrome c oxidase (complex IV, CIV), a multisubunit enzyme composed of a catalytic core of 3 subunits and several supernumerary subunits. The complex exists as a monomer or a dimer and forms supercomplexes (SCs) in the inner mitochondrial membrane with ubiquinol-cytochrome c oxidoreductase (cytochrome b-c1 complex, complex III, CIII). Heme serves as cofactor. Cu cation is required as a cofactor.

The protein resides in the mitochondrion inner membrane. It carries out the reaction 4 Fe(II)-[cytochrome c] + O2 + 8 H(+)(in) = 4 Fe(III)-[cytochrome c] + 2 H2O + 4 H(+)(out). It functions in the pathway energy metabolism; oxidative phosphorylation. Functionally, component of the cytochrome c oxidase, the last enzyme in the mitochondrial electron transport chain which drives oxidative phosphorylation. The respiratory chain contains 3 multisubunit complexes succinate dehydrogenase (complex II, CII), ubiquinol-cytochrome c oxidoreductase (cytochrome b-c1 complex, complex III, CIII) and cytochrome c oxidase (complex IV, CIV), that cooperate to transfer electrons derived from NADH and succinate to molecular oxygen, creating an electrochemical gradient over the inner membrane that drives transmembrane transport and the ATP synthase. Cytochrome c oxidase is the component of the respiratory chain that catalyzes the reduction of oxygen to water. Electrons originating from reduced cytochrome c in the intermembrane space (IMS) are transferred via the dinuclear copper A center (CU(A)) of subunit 2 and heme A of subunit 1 to the active site in subunit 1, a binuclear center (BNC) formed by heme A3 and copper B (CU(B)). The BNC reduces molecular oxygen to 2 water molecules using 4 electrons from cytochrome c in the IMS and 4 protons from the mitochondrial matrix. This Plasmodium chabaudi protein is Cytochrome c oxidase subunit 1 (COI).